Consider the following 320-residue polypeptide: Beta-ketoacyl-[acyl-carrier-protein] synthase III (320 aa).

Active-site residues include C112 and H245. Positions 246–250 (QANIR) are ACP-binding. Residue N275 is part of the active site.

Belongs to the thiolase-like superfamily. FabH family. Homodimer.

It localises to the cytoplasm. The catalysed reaction is malonyl-[ACP] + acetyl-CoA + H(+) = 3-oxobutanoyl-[ACP] + CO2 + CoA. It participates in lipid metabolism; fatty acid biosynthesis. In terms of biological role, catalyzes the condensation reaction of fatty acid synthesis by the addition to an acyl acceptor of two carbons from malonyl-ACP. Catalyzes the first condensation reaction which initiates fatty acid synthesis and may therefore play a role in governing the total rate of fatty acid production. Possesses both acetoacetyl-ACP synthase and acetyl transacylase activities. Its substrate specificity determines the biosynthesis of branched-chain and/or straight-chain of fatty acids. In Streptococcus thermophilus (strain CNRZ 1066), this protein is Beta-ketoacyl-[acyl-carrier-protein] synthase III.